A 261-amino-acid polypeptide reads, in one-letter code: 14-3-3-like protein GF14-12 (261 aa).

Belongs to the 14-3-3 family.

Is associated with a DNA binding complex to bind to the G box, a well-characterized cis-acting DNA regulatory element found in plant genes. This Zea mays (Maize) protein is 14-3-3-like protein GF14-12 (GRF2).